We begin with the raw amino-acid sequence, 889 residues long: Extended synaptotagmin-3 (889 aa).

The tract at residues 1–65 is disordered; it reads MAQGDPGGQT…GPRDPGQGGA (65 aa). The Cytoplasmic portion of the chain corresponds to 1-66; the sequence is MAQGDPGGQT…PRDPGQGGAG (66 aa). Basic and acidic residues-rich tracts occupy residues 17-28 and 41-58; these read TDKKPDEPKATE and PGGE…KGPR. 2 helical membrane-spanning segments follow: residues 67–91 and 92–112; these read EALA…FPVY and LCGR…LWMF. The Cytoplasmic segment spans residues 113 to 889; sequence WTRNKKFKLA…ELTPTGLPTS (777 aa). The 179-residue stretch at 155 to 333 folds into the SMP-LTD domain; sequence DVERVEWLNK…LPNRFTVPLS (179 aa). 2 consecutive C2 domains span residues 331–452 and 468–618; these read PLSS…DEWF and WLSL…STIK. 9 residues coordinate Ca(2+): lysine 363, aspartate 364, aspartate 376, aspartate 423, glutamate 424, aspartate 425, aspartate 427, aspartate 429, and aspartate 430. A disordered region spans residues 649-724; it reads SIKRAQSQQH…GAVPESHTPS (76 aa). The segment covering 658–671 has biased composition (basic residues); that stretch reads HKSHGKSHQAHHQA. 2 stretches are compositionally biased toward low complexity: residues 672 to 682 and 691 to 714; these read HQTQQNHTVQQ and ISTT…PNST. A C2 3 domain is found at 757-879; the sequence is MTGEVEVSVR…DLVKGFTKWF (123 aa). A required for phosphatidylinositol 4,5-bisphosphate-dependent location at the cell membrane region spans residues 804-811; it reads RKWSGRKK.

The protein belongs to the extended synaptotagmin family.

Its subcellular location is the cell membrane. It is found in the endoplasmic reticulum membrane. In terms of biological role, tethers the endoplasmic reticulum to the cell membrane and promotes the formation of appositions between the endoplasmic reticulum and the cell membrane. Binds glycerophospholipids in a barrel-like domain and may play a role in cellular lipid transport. The protein is Extended synaptotagmin-3 (esyt3) of Xenopus tropicalis (Western clawed frog).